A 430-amino-acid polypeptide reads, in one-letter code: Enolase (430 aa).

Gln167 serves as a coordination point for (2R)-2-phosphoglycerate. The active-site Proton donor is Glu209. The Mg(2+) site is built by Asp245, Glu286, and Asp313. Residues Lys338, Arg367, Ser368, and Lys389 each contribute to the (2R)-2-phosphoglycerate site. The Proton acceptor role is filled by Lys338.

It belongs to the enolase family. Mg(2+) is required as a cofactor.

It localises to the cytoplasm. It is found in the secreted. The protein resides in the cell surface. The enzyme catalyses (2R)-2-phosphoglycerate = phosphoenolpyruvate + H2O. The protein operates within carbohydrate degradation; glycolysis; pyruvate from D-glyceraldehyde 3-phosphate: step 4/5. Its function is as follows. Catalyzes the reversible conversion of 2-phosphoglycerate (2-PG) into phosphoenolpyruvate (PEP). It is essential for the degradation of carbohydrates via glycolysis. This is Enolase from Synechococcus sp. (strain CC9311).